Consider the following 278-residue polypeptide: NADPH-dependent 7-cyano-7-deazaguanine reductase (278 aa).

87-89 lines the substrate pocket; the sequence is IES. 89–90 serves as a coordination point for NADPH; that stretch reads SK. Cysteine 185 acts as the Thioimide intermediate in catalysis. The Proton donor role is filled by aspartate 192. Residue 224 to 225 participates in substrate binding; that stretch reads HE. 253-254 contacts NADPH; it reads RG. Positions 255 to 278 are disordered; it reads GLDINPYRSTNPTFSVQNHRSFRQ. Residues 261–278 are compositionally biased toward polar residues; the sequence is YRSTNPTFSVQNHRSFRQ.

This sequence belongs to the GTP cyclohydrolase I family. QueF type 2 subfamily. As to quaternary structure, homodimer.

It localises to the cytoplasm. The enzyme catalyses 7-aminomethyl-7-carbaguanine + 2 NADP(+) = 7-cyano-7-deazaguanine + 2 NADPH + 3 H(+). It functions in the pathway tRNA modification; tRNA-queuosine biosynthesis. Its function is as follows. Catalyzes the NADPH-dependent reduction of 7-cyano-7-deazaguanine (preQ0) to 7-aminomethyl-7-deazaguanine (preQ1). This Coxiella burnetii (strain Dugway 5J108-111) protein is NADPH-dependent 7-cyano-7-deazaguanine reductase.